The primary structure comprises 487 residues: GPI mannosyltransferase 1 (487 aa).

3 consecutive transmembrane segments (helical) span residues 26–46, 87–107, and 121–141; these read PLPL…YGLW, ILAW…GPWA, and VLFA…LVMG. A disordered region spans residues 147–175; sequence SAAKGKEKDTEKTKEGGKKGPSVTASTGM. A compositionally biased stretch (basic and acidic residues) spans 150 to 164; sequence KGKEKDTEKTKEGGK. 7 helical membrane passes run 205–225, 227–247, 289–309, 359–379, 393–413, 429–449, and 462–482; these read LLGV…ITLA, LLLG…PAIV, LLLA…MYRL, IESL…PLTL, FAFV…YLVL, MGLV…QQAY, and GLWM…GVIV.

The protein belongs to the PIGM family.

The protein localises to the endoplasmic reticulum membrane. It participates in glycolipid biosynthesis; glycosylphosphatidylinositol-anchor biosynthesis. Functionally, mannosyltransferase involved in glycosylphosphatidylinositol-anchor biosynthesis. Transfers the first alpha-1,4-mannose to GlcN-acyl-PI during GPI precursor assembly. Required for cell wall integrity. In Neurospora crassa (strain ATCC 24698 / 74-OR23-1A / CBS 708.71 / DSM 1257 / FGSC 987), this protein is GPI mannosyltransferase 1 (gim-1).